Consider the following 100-residue polypeptide: Urease subunit gamma (100 aa).

It belongs to the urease gamma subunit family. Heterotrimer of UreA (gamma), UreB (beta) and UreC (alpha) subunits. Three heterotrimers associate to form the active enzyme.

The protein resides in the cytoplasm. The catalysed reaction is urea + 2 H2O + H(+) = hydrogencarbonate + 2 NH4(+). Its pathway is nitrogen metabolism; urea degradation; CO(2) and NH(3) from urea (urease route): step 1/1. This chain is Urease subunit gamma, found in Pseudomonas syringae pv. syringae (strain B728a).